We begin with the raw amino-acid sequence, 248 residues long: tRNA1(Val) (adenine(37)-N6)-methyltransferase (248 aa).

It belongs to the methyltransferase superfamily. tRNA (adenine-N(6)-)-methyltransferase family.

It is found in the cytoplasm. It catalyses the reaction adenosine(37) in tRNA1(Val) + S-adenosyl-L-methionine = N(6)-methyladenosine(37) in tRNA1(Val) + S-adenosyl-L-homocysteine + H(+). Specifically methylates the adenine in position 37 of tRNA(1)(Val) (anticodon cmo5UAC). The polypeptide is tRNA1(Val) (adenine(37)-N6)-methyltransferase (Yersinia pseudotuberculosis serotype O:1b (strain IP 31758)).